A 466-amino-acid chain; its full sequence is MARTLYEKLFDAHVVYEASNETPLLYIDRHLVHEVTSPQAFDGLRAHNRQVRQPGKTFATMDHNVSTQTKDINASGEMARIQMQELIKNCNAFGVELYDLNHPFQGIVHVMGPEQGITLPGMTIVCGDSHTATHGAFGALAFGIGTSEVEHVLATQTLKQGRAKTMKIEVKGHAAPGITAKDIVLAIIGKTGSAGGTGHVVEFCGDAIRALSMEGRMTLCNMAIEMGAKAGLVAPDDITFNYVKGRLHAPKGNDFDDAVEYWKTLQTDEGATFDTVVTLQAEEIAPQVTWGTNPGQVISVNDNVPDPASFADPVERASAEKALAYMGLKPGIPLTEVAIDKVFIGSCTNSRIEDLRAAAEIAKGRKVAPGVQALVVPGSGPVKAQAEAEGLDKIFIEAGFEWRLPGCSMCLAMNNDRLNPGERCASTSNRNFEGRQGRGGRTHLVSPAMAAAAAVTGHFADIRVLK.

Residues C347, C407, and C410 each contribute to the [4Fe-4S] cluster site.

It belongs to the aconitase/IPM isomerase family. LeuC type 1 subfamily. Heterodimer of LeuC and LeuD. [4Fe-4S] cluster is required as a cofactor.

It catalyses the reaction (2R,3S)-3-isopropylmalate = (2S)-2-isopropylmalate. It participates in amino-acid biosynthesis; L-leucine biosynthesis; L-leucine from 3-methyl-2-oxobutanoate: step 2/4. Catalyzes the isomerization between 2-isopropylmalate and 3-isopropylmalate, via the formation of 2-isopropylmaleate. This chain is 3-isopropylmalate dehydratase large subunit, found in Enterobacter sp. (strain 638).